Here is a 241-residue protein sequence, read N- to C-terminus: Phosphoadenosine 5'-phosphosulfate reductase (241 aa).

Residues 221–241 are disordered; the sequence is GADPRSGRWRGKAKTECGLHA. Cysteine 237 acts as the Nucleophile; cysteine thiosulfonate intermediate in catalysis.

Belongs to the PAPS reductase family. CysH subfamily.

The protein localises to the cytoplasm. The catalysed reaction is [thioredoxin]-disulfide + sulfite + adenosine 3',5'-bisphosphate + 2 H(+) = [thioredoxin]-dithiol + 3'-phosphoadenylyl sulfate. It functions in the pathway sulfur metabolism; hydrogen sulfide biosynthesis; sulfite from sulfate: step 3/3. Catalyzes the formation of sulfite from phosphoadenosine 5'-phosphosulfate (PAPS) using thioredoxin as an electron donor. This Gloeobacter violaceus (strain ATCC 29082 / PCC 7421) protein is Phosphoadenosine 5'-phosphosulfate reductase.